The primary structure comprises 92 residues: Putative phosphotransferase enzyme IIB component SgcB (92 aa).

The region spanning 1–92 (MKKILVACGT…KQQIKALLTQ (92 aa)) is the PTS EIIB type-2 domain. Catalysis depends on cysteine 8, which acts as the Phosphocysteine intermediate.

It is found in the cytoplasm. In terms of biological role, the phosphoenolpyruvate-dependent sugar phosphotransferase system (sugar PTS), a major carbohydrate active -transport system, catalyzes the phosphorylation of incoming sugar substrates concomitantly with their translocation across the cell membrane. The sequence is that of Putative phosphotransferase enzyme IIB component SgcB (sgcB) from Escherichia coli (strain K12).